A 259-amino-acid chain; its full sequence is Type III pantothenate kinase (259 aa).

6–13 is a binding site for ATP; it reads DTGNTNTV. 107–110 provides a ligand contact to substrate; that stretch reads GPDR. The Proton acceptor role is filled by D109. D129 lines the K(+) pocket. ATP is bound at residue T132. Position 184 (T184) interacts with substrate.

It belongs to the type III pantothenate kinase family. In terms of assembly, homodimer. The cofactor is NH4(+). K(+) is required as a cofactor.

It localises to the cytoplasm. It catalyses the reaction (R)-pantothenate + ATP = (R)-4'-phosphopantothenate + ADP + H(+). Its pathway is cofactor biosynthesis; coenzyme A biosynthesis; CoA from (R)-pantothenate: step 1/5. In terms of biological role, catalyzes the phosphorylation of pantothenate (Pan), the first step in CoA biosynthesis. This is Type III pantothenate kinase from Paracoccus denitrificans (strain Pd 1222).